A 414-amino-acid chain; its full sequence is Serine/threonine transporter SstT (414 aa).

Topologically, residues 2-15 (TTQRSPGLFRRLAH) are cytoplasmic. The chain crosses the membrane as a helical span at residues 16 to 36 (GSLVKQILVGLVLGILLAWIS). Topologically, residues 37–45 (KPAAEAVGL) are periplasmic. The helical transmembrane segment at 46–66 (LGTLFVGALKAVAPILVLMLV) threads the bilayer. The Cytoplasmic segment spans residues 67–83 (MASIANHQHGQKTNIRP). The helical transmembrane segment at 84–104 (ILFLYLLGTFSAALAAVVFSF) threads the bilayer. The Periplasmic portion of the chain corresponds to 105-142 (AFPSTLHLSSSAGDISPPSGIVEVMRGLVMSMVSNPID). A helical membrane pass occupies residues 143–163 (ALLKGNYIGILVWAIGLGFAL). Over 164-179 (RHGNETTKNLVNDMSN) the chain is Cytoplasmic. The chain crosses the membrane as a helical span at residues 180 to 200 (AVTFMVKLVIRFAPFGIFGLV). At 201-217 (SSTLATTGFSTLWGYAQ) the chain is on the periplasmic side. A helical transmembrane segment spans residues 218-238 (LLVVLVGCMLLVALVVNPLLV). The Cytoplasmic portion of the chain corresponds to 239–299 (WWKIRRNPFP…VSIPLGATIN (61 aa)). Residues 300 to 320 (MAGAAITITVLTLAAVNTLGI) form a helical membrane-spanning segment. The Periplasmic segment spans residues 321 to 331 (PVDLPTALLLS). Residues 332 to 352 (VVASLCACGASGVAGGSLLLI) form a helical membrane-spanning segment. Residues 353–414 (PLACNMFGIS…DRLANSALRN (62 aa)) lie on the Cytoplasmic side of the membrane.

Belongs to the dicarboxylate/amino acid:cation symporter (DAACS) (TC 2.A.23) family.

It is found in the cell inner membrane. It carries out the reaction L-serine(in) + Na(+)(in) = L-serine(out) + Na(+)(out). The catalysed reaction is L-threonine(in) + Na(+)(in) = L-threonine(out) + Na(+)(out). Functionally, involved in the import of serine and threonine into the cell, with the concomitant import of sodium (symport system). This Shigella flexneri protein is Serine/threonine transporter SstT.